Consider the following 367-residue polypeptide: MYPESTTGSPARLSLRQTGSPGMIYSTRYGSPKRQLQFYRNLGKSGLRVSCLGLGTWVTFGGQITDEMAEQLMTLAYDNGINLFDTAEVYAAGKAEVVLGNIIKKKGWRRSSLVITTKIFWGGKAETERGLSRKHIIEGLKASLERLQLEYVDVVFANRPDPNTPMEETVRAMTHVINQGMAMYWGTSRWSSMEIMEAYSVARQFNLIPPICEQAEYHMFQREKVEVQLPELFHKIGVGAMTWSPLACGIVSGKYDSGIPPYSRASLKGYQWLKDKILSEEGRRQQAKLKELQAIAERLGCTLPQLAIAWCLRNEGVSSVLLGASSADQLMENIGAIQVLPKLSSSIIHEIDSILGNKPYSKKDYRS.

3 positions are modified to phosphoserine: Ser9, Ser14, and Ser20. Arg28 bears the Asymmetric dimethylarginine; alternate mark. At Arg28 the chain carries Omega-N-methylarginine; alternate. Ser31 bears the Phosphoserine mark. The NADP(+) site is built by Thr56, Trp57, Gln63, and Asp85. Tyr90 serves as the catalytic Proton donor/acceptor. A Phosphoserine modification is found at Ser112. Lys124 carries the post-translational modification N6-acetyllysine. NADP(+)-binding residues include Asn158, Ser188, Arg189, Gln214, Trp243, Ser244, Pro245, Leu246, Ala247, Cys248, Lys254, Tyr262, Arg264, Gly323, Ser325, Gln329, Glu332, and Asn333.

The protein belongs to the shaker potassium channel beta subunit family. In terms of assembly, homotetramer. Interaction with tetrameric potassium channel alpha subunits gives rise to a heterooctamer. Identified in potassium channel complexes containing KCNA1, KCNA2, KCNA4, KCNA5, KCNA6, KCNAB1, KCNAB2 and KCND3. Interacts (in unphosphorylated form) with MAPRE1. Forms a ternary complex with SQSTM1 and PRKCZ. Post-translationally, phosphorylated by PRKCZ; may be regulated by incorporation in a complex composed of PRKCZ and SQSTM1. In terms of tissue distribution, detected in the juxtaparanodal region of nodes of Ranvier in myelinated nerve fibers in the spinal cord (at protein level).

The protein localises to the cytoplasm. It is found in the membrane. Its subcellular location is the cell membrane. The protein resides in the cell projection. It localises to the axon. The protein localises to the synapse. It is found in the synaptosome. Its subcellular location is the cytoskeleton. It catalyses the reaction hydroxyacetone + NADP(+) = methylglyoxal + NADPH + H(+). The enzyme catalyses (E)-4-oxonon-2-en-1-ol + NADP(+) = (E)-4-oxonon-2-enal + NADPH + H(+). Its function is as follows. Regulatory subunit of the voltage-gated potassium (Kv) Shaker channels composed of pore-forming and potassium-conducting alpha subunits and of regulatory beta subunits. The beta-2/KCNAB2 cytoplasmic subunit promotes potassium channel closure via a mechanism that does not involve physical obstruction of the channel pore. Promotes the inactivation of Kv1.4/KCNA4 and Kv1.5/KCNA5 alpha subunit-containing channels. Displays nicotinamide adenine dinucleotide phosphate (NADPH)-dependent aldoketoreductase activity by catalyzing the NADPH-dependent reduction of a wide range of aldehyde and ketone substrates. Substrate specificity includes methylglyoxal, 9,10-phenanthrenequinone, prostaglandin J2, 4-nitrobenzaldehyde, 4-nitroacetophenone and 4-oxo-trans-2-nonenal (in vitro, no physiological substrate identified yet). The binding of oxidized and reduced nucleotide alters Kv channel gating and may contribute to dynamic fine tuning of cell excitability. Contributes to the regulation of nerve signaling, and prevents neuronal hyperexcitability. In Bos taurus (Bovine), this protein is Voltage-gated potassium channel subunit beta-2 (KCNAB2).